A 626-amino-acid polypeptide reads, in one-letter code: Elongation factor 4 (626 aa).

The tr-type G domain maps to 14–195 (SLIRNFCIIA…RIVVDVPAPT (182 aa)). Residues 26–31 (DHGKST) and 142–145 (NKID) each bind GTP. The segment at 603 to 626 (LSTGEGGNDRDTKDKIRAAQKSEG) is disordered. Residues 609–626 (GNDRDTKDKIRAAQKSEG) are compositionally biased toward basic and acidic residues.

Belongs to the TRAFAC class translation factor GTPase superfamily. Classic translation factor GTPase family. LepA subfamily.

It localises to the cell membrane. It catalyses the reaction GTP + H2O = GDP + phosphate + H(+). In terms of biological role, required for accurate and efficient protein synthesis under certain stress conditions. May act as a fidelity factor of the translation reaction, by catalyzing a one-codon backward translocation of tRNAs on improperly translocated ribosomes. Back-translocation proceeds from a post-translocation (POST) complex to a pre-translocation (PRE) complex, thus giving elongation factor G a second chance to translocate the tRNAs correctly. Binds to ribosomes in a GTP-dependent manner. In Bifidobacterium animalis subsp. lactis (strain AD011), this protein is Elongation factor 4.